The primary structure comprises 561 residues: Melanopsin-A (561 aa).

Topologically, residues 1–34 (MRPSTDTMEADTAATHRNFITKVDVPDHAHYTVA) are extracellular. A helical membrane pass occupies residues 35 to 55 (FFVSVIGTLGVTGNALVQFAF). Residues 56–68 (YSNKKLRNLPNYF) are Cytoplasmic-facing. A helical membrane pass occupies residues 69–89 (IMNQAASDFLMAFTQSPFFFI). The Extracellular portion of the chain corresponds to 90–104 (NCLNREWIFGELGCK). A disulfide bridge links cysteine 103 with cysteine 181. The helical transmembrane segment at 105 to 125 (LYAFLGALFGITSMINLLAIS) threads the bilayer. Over 126–148 (LDRYMVITRPLEAMKWNSKRRTT) the chain is Cytoplasmic. Residues 149-169 (IAILLVWLYSLAWSLAPLVGW) traverse the membrane as a helical segment. Residues 170 to 201 (SSYIPEGLRTSCTWDYVTYTASNRSYTMMLCC) lie on the Extracellular side of the membrane. Asparagine 192 carries an N-linked (GlcNAc...) asparagine glycan. Residues 202–222 (FVFFIPLAIISYCYLFMFLAI) traverse the membrane as a helical segment. At 223–255 (RKTSRDVERLGIQVRKSTIIRQKSIRTEWKLAK) the chain is on the cytoplasmic side. The chain crosses the membrane as a helical span at residues 256–276 (IAFVVIVVYVLSWSPYACVTM). The Extracellular portion of the chain corresponds to 277 to 291 (ISWSGHANILSPYSK). Residues 292 to 312 (TVPAVIAKASTIYNPFIYAII) traverse the membrane as a helical segment. Lysine 299 is subject to N6-(retinylidene)lysine. Topologically, residues 313–561 (HQKYRKTLAD…EDSLEDNDVV (249 aa)) are cytoplasmic. Disordered stretches follow at residues 359–385 (AIRR…SYSS), 404–448 (ASFR…SATH), 479–503 (NGLS…SKSA), and 539–561 (SFTD…NDVV). The segment covering 371–385 (ASASKTAAGASSYSS) has biased composition (low complexity). Residues 550-561 (VDEDSLEDNDVV) are compositionally biased toward acidic residues.

The protein belongs to the G-protein coupled receptor 1 family. Opsin subfamily. Expressed in retina and brain. Expressed in a subset of retinal horizontal cells as well as a small number of amacrine and retinal ganglion cells. Also expressed in a small population of neurons in the suprachiasmatic nucleus (SNC).

It localises to the cell membrane. Its function is as follows. Photoreceptor implicated in non-image-forming responses to light. This Gadus morhua (Atlantic cod) protein is Melanopsin-A (opn4a).